A 142-amino-acid polypeptide reads, in one-letter code: Large ribosomal subunit protein uL13 (142 aa).

Belongs to the universal ribosomal protein uL13 family. As to quaternary structure, part of the 50S ribosomal subunit.

In terms of biological role, this protein is one of the early assembly proteins of the 50S ribosomal subunit, although it is not seen to bind rRNA by itself. It is important during the early stages of 50S assembly. The polypeptide is Large ribosomal subunit protein uL13 (Vibrio vulnificus (strain CMCP6)).